Here is a 3133-residue protein sequence, read N- to C-terminus: MDSASTSMSRVHPSGVYRRPLLPSGGPRSTSERDERVDLSGCPRHVERGTCLSLPPSFSAAAVDACLDSRCQVLSTAASGGCMQSATEHLRVSTRPCVASTHANSGTFAAVRSRVQRGQALSLFLLFSSSPLLLLLLLHQFFISSLHTEAVLGSPLLPALAVEVSSPEALKTTFEEREADSHRGSRDGEKVSGSRDIRFEEQEIRSRDGKETIFPSPHGDQPSGAGAWTSEGRRKKRSFYRDHIERGTSHPAFSFFSDPTSRFVLDPHLPASHASTCERGASCSPVDAIQPVFVSPSHSGNESEKAERARLEQSTPAKLWRPPKVFAESFASERRQTDTGLVSLHGDVAFRSPGFTVSIKRQAQKEWEREQLREKLLAEGGDLSMLEVQDDNDSGEIYLYSSMQLALDRQCVSQAEAMKTDWSYVRLHASNFYCFSKDDLNFETTGQNCVDSCSQTVACAGVPTTRAIRNITDTAKLPDNILGRNWPLKHCVTSRLQDALNEICGSPESIYRVVNDVAGCVPVESIDWTEASPVCVDDCNKVVNCYGQVTNADQMVPFTSDQRAMLETRKKSTCLCDETLEQGKLYRGCQTRTRTGRECQRWDVDSPHEHFELREAHNYCRNVNAEAEIWCYTTDPHVRFDFCDPLGVSERFVQPGETVDIVISGVDLSPHYSLRIYKGSETNVCGANNGQRAPAAFKDWGVERHFLPKYSVTDGTISLLTWPDLGIEPTATGKIALCACNFFGFLASNWNGATPCSQDSHFNVQLGVLHVIGPVHASGGEVQMISGVPHEFTVRGAGLRTVDTLVAVGDRTGVMCTSPNFFQMQLELLRGVGDGAFAVFTKGIATGENQYVKTGFKSVTSDGLLATTGDLTLLATGHYCLCWQGTNNGQRAYGLVDKLVVTGVDLSLTYRSVYSPSAGSASQKLFSTFIHTYRLSKDFADDALTVRTATKTPCEGTVVAQSRKIEKEYRSTTQMATEKLLYKAKYMSVKNLPESSTTYSEMLHVCLKSPNGEVLQFLGESSISEYYSYPFHDFVLPETLHVRTPSSVYSYTVSEFSNLGLHWGTVERDGEVVIGNFLDFFTANPFSKVLHFWLSHSGNVITAWAFSASDPSPTLMATFKSEFPVGMALHTTANFVHLYLLKGQTPATLFVMDVTVPSTGLSPEALIHALDPGQAGLVEPSNIVLIYEGEEDESDPVVVLVDSGTGYIHLFDHDLQEVGKSNGQEALAQPLVKPTDLHCLRKTEGSGTVSSVWDCFATDVGLPRVIYFSIDASTKEFRFLTTYSGEGTKDGVNTNLRGPISVVAHYFSGKTLIYVAEAASAYPLLLTKVDEEETLHYYAYLSQNSVGSSSTVGRLSLLHFSDDNSSLEHVSLATFRDAWRGAEVQIVSLDTTATVPNFRYHPHEWYTVGDTHSLEPSVIGLGTLKGVRKFALSTEIPNAAYVHSIASVDPNTGVVKLELTHIQRASVEIQVIAQGMVSQMTTTFKFNVACKDGYYYSQGMCVRCAAGTYNSVNLIKADPASSWAKCRKCGENHTTVAEGSISEDQCQCQLGFHIPDESEEGAKCEPCPAGMWKDTVANTGCIGSCPAHSSTTVVGAKSAEERRCECDAGYYFVGESVLNQECVLAEKGYFSEGGFEAERVPCPQHSTTNPNDDPSFVSRNLEACVCEKGYTPASLQSLEDSSSPEWKLMEWLKIHPKHTQLAKSQVCVPCGRGFYKDSIGAHACTPCPLNSFAATSVATSAAECELCQPGYYQTGNSDVPCGECPEGHFCVGSEPTVSSLSQYAGAKIMCPDNTATVPPNAQNDHPYKCMCQEGFEFSKVDSVTPTVICQPARVGDYKGVVSNTPGQRCPSGSSTQSTGSVSLEDCICTPGYFFSEASGECTECPVGFYCPGGRDSLTASHTMPVQCPAETNTRGTMSATSAECVCDKGYYRFSSQVNSGDIVCRPCPANSFKDWVGNDVCKACSENSGTEQTGANSASQCLCSRGFYYDISQAECVACSNPLKYCPGGEVECEEEEDNCVNGKKPAEPQACPPHTRITAGYDTPWSLDDCKCDPGFAYESGSAADGEKRCEPCSAGSYKSSVQDGPCNGLCGTSSTSFPGAQTQSQCFCEEGTYFAADACHTCPIGAFCGGGLLEEAEAKLREDSSFTGITSADHVKPFAEAGYFLNKLKEELESPNDWQFTECPIQNACLSHGVCSETMTEYLCSECRRGYTNTFSKGEICTSCPSMVWNIVCLMGYYLATLLFNIVMTYMNVAAGFNRRSIHSIVIKIASNYLTGISVLSVIDFSTIAFPSWITDLTATVTETVSAKHSTRLMSVDCLLRDNFDLSFSESFFYTMVFYALIPIALPIVATIIMSIIVYRVRAWYHNSTQRKLELLKQTMQYGLYSLAQQLKEKYEEDRVFMIFRYIALPGESIFRRAAKFMEDMIPIYVTVLFFVYSSTTRNMLSLLDCTYIDFGRAHQAKYFLRAAMSVECTDILSGPYFKFFAVGITGLLVWSIGIPLSCFLVLYVNRKTLNSRETRLKYGFLHNGFVKKYWYWEMVVFARKFLVIVVSSVALIPSADKNGSRVWLAVVIAVIFLIIHLVTQPFDKRSYLTLDKLENHSMTIWTITLIVLAMMIGSDFSGSVNMALLLFVAVLSCMFILEVGVSLMFAYFDNVRTQQTFFRVPVIGYVFRFFARLSEKRRAREPIVVFDTENEVIQLVAAKRQTWTLFRALRKNINLAERNYFIKVMSESLGFAVVHMKLDVIPGSFLEFALRLGLAFHRVEEVSQQNKKSLQAIADGDLSQLADWSNNEHKRKDLSESAKTSQKKLATELDTFYTDMEEKFAAKDETPTAEEKTEEQDERLHDLEGELVSDTELEQMKKTMTEAEEAEEDEDRGDDAAYLRNLQDFTNDITGEDEETMYLFDQDMMTRGIALSELYLALLKLQMQDSNTINSQFDAFRLRKQIQADEFSEALQKRNRKLKVMREALESLVLSSGTSLAELGMTEEAFQSKQAELQKLNAEIEKLKTRLQELKDNPDSYREGGDVEREEDWVDEDRAAEIEKIQEENARRKLEKEEREEADREICMTGEDMENAGWFGEDDTATIDDSSDAPLPEGTFRLIGQDAETWDEFGYSSSKGNYEAAPDDGL.

Residues 1–39 (MDSASTSMSRVHPSGVYRRPLLPSGGPRSTSERDERVDL) are disordered. Residues 30–39 (TSERDERVDL) show a composition bias toward basic and acidic residues. A helical transmembrane segment spans residues 123–143 (LFLLFSSSPLLLLLLLHQFFI). 2 stretches are compositionally biased toward basic and acidic residues: residues 173–211 (TFEE…DGKE) and 301–311 (NESEKAERARL). Disordered regions lie at residues 173–234 (TFEE…EGRR) and 294–317 (VSPS…STPA). N-linked (GlcNAc...) asparagine glycosylation is found at asparagine 301, asparagine 392, and asparagine 470. Positions 577-644 (DETLEQGKLY…DPHVRFDFCD (68 aa)) constitute a Kringle domain. Disulfide bonds link cysteine 599–cysteine 631 and cysteine 620–cysteine 643. Asparagine 1364 and asparagine 1532 each carry an N-linked (GlcNAc...) asparagine glycan. 3 helical membrane-spanning segments follow: residues 2229–2249 (MVWN…FNIV), 2276–2296 (LTGI…PSWI), and 2339–2359 (VFYA…MSII). A glycan (N-linked (GlcNAc...) asparagine) is linked at asparagine 2369. A run of 3 helical transmembrane segments spans residues 2420-2440 (AAKF…FVYS), 2489-2509 (VGIT…FLVL), and 2539-2559 (WEMV…VALI). Residue asparagine 2565 is glycosylated (N-linked (GlcNAc...) asparagine). Residues 2569 to 2589 (VWLAVVIAVIFLIIHLVTQPF) traverse the membrane as a helical segment. N-linked (GlcNAc...) asparagine glycosylation is present at asparagine 2602. 2 helical membrane-spanning segments follow: residues 2607 to 2627 (IWTI…SGSV) and 2632 to 2652 (LLFV…SLMF). 2 stretches are compositionally biased toward basic and acidic residues: residues 2827–2838 (FAAKDETPTAEE) and 3049–3069 (QEEN…DREI). Disordered stretches follow at residues 2827–2847 (FAAK…DERL) and 3049–3101 (QEEN…LPEG). The stretch at 2955 to 3068 (SEALQKRNRK…KEEREEADRE (114 aa)) forms a coiled coil. The segment covering 3083–3094 (GEDDTATIDDSS) has biased composition (acidic residues).

As to quaternary structure, component of a complex, at least composed of cysteine repeat modular protein A (CRMPa), cysteine repeat modular protein B (CRMPb), micronemal protein 15 (MIC15) and thrombospondin type 1 domain-containing protein (TSP1).

The protein localises to the cell membrane. The protein resides in the endoplasmic reticulum. Its subcellular location is the golgi apparatus. Required for triggering rhoptry secretion. Plays a role in host cell invasion. The protein is Cysteine repeat modular protein A of Toxoplasma gondii.